Here is a 403-residue protein sequence, read N- to C-terminus: F-box only protein 22 (403 aa).

The residue at position 1 (Met-1) is an N-acetylmethionine. The region spanning 21-67 (FVLSNLAEVVERVLTFLPAKALLRVACVCRLWRECVRRVLRTHRSVT) is the F-box domain. Thr-127 is subject to Phosphothreonine. The residue at position 128 (Ser-128) is a Phosphoserine. At Lys-194 the chain carries N6-acetyllysine.

As to quaternary structure, directly interacts with SKP1 and CUL1. Interacts (via C-terminal) with KDM4A. Interacts with TP53. Interacts with MTOR; this interaction promotes 'lys-27'-linked ubiquitination of MTOR. In terms of assembly, (Microbial infection) Interacts with SARS_COV-2 protein NSP5; this interaction attenuates NSP5-mediated inhibition of innate immunity. In terms of processing, phosphorylated by EIF2AK4 at Thr-127 causes cytoplasmic retention of FBXO22. In terms of tissue distribution, predominantly expressed in liver, also enriched in cardiac muscle.

It localises to the cytoplasm. It is found in the nucleus. The protein resides in the myofibril. Its subcellular location is the sarcomere. The protein localises to the z line. Functionally, substrate-recognition component of the SCF (SKP1-CUL1-F-box protein)-type E3 ubiquitin ligase complex that is implicated in the control of various cellular processes such as cell cycle control, transcriptional regulation, DNA damage repair, and apoptosis. Promotes the proteasome-dependent degradation of key sarcomeric proteins, such as alpha-actinin (ACTN2) and filamin-C (FLNC), essential for maintenance of normal contractile function. Acts as a key regulator of histone methylation marks namely H3K9 and H3K36 methylation through the regulation of histone demethylase KDM4A protein levels. In complex with KDM4A, also regulates the abundance of TP53 by targeting methylated TP53 for degradation at the late senescent stage. Under oxidative stress, promotes the ubiquitination and degradation of BACH1. Mechanistically, reactive oxygen species (ROS) covalently modify cysteine residues on the bZIP domain of BACH1, leading to its release from chromatin and making it accessible to FBXO22. Upon amino acid depletion, mediates 'Lys-27'-linked ubiquitination of MTOR and thereby inhibits substrate recruitment to mTORC1. Also inhibits SARS-CoV-2 replication by inducing NSP5 degradation. The sequence is that of F-box only protein 22 (FBXO22) from Homo sapiens (Human).